A 200-amino-acid polypeptide reads, in one-letter code: uncharacterized protein (200 aa).

Residues 149-200 (APDPGGSVATEEVLRSDDRDSHTQDSASEWPEGNDSVGSAAMRIDLSRIGGT) are disordered. The span at 160 to 171 (EVLRSDDRDSHT) shows a compositional bias: basic and acidic residues.

It to A.tumefaciens Ti plasmid conjugal transfer region I ORFR2 and ORFR3.

This is an uncharacterized protein from Sinorhizobium fredii (strain NBRC 101917 / NGR234).